We begin with the raw amino-acid sequence, 122 residues long: Large ribosomal subunit protein uL14 (122 aa).

The protein belongs to the universal ribosomal protein uL14 family. In terms of assembly, part of the 50S ribosomal subunit. Forms a cluster with proteins L3 and L19. In the 70S ribosome, L14 and L19 interact and together make contacts with the 16S rRNA in bridges B5 and B8.

In terms of biological role, binds to 23S rRNA. Forms part of two intersubunit bridges in the 70S ribosome. The protein is Large ribosomal subunit protein uL14 of Campylobacter lari (strain RM2100 / D67 / ATCC BAA-1060).